The sequence spans 545 residues: SLAIN motif-containing protein 1 (545 aa).

Residues 14–53 are a coiled coil; that stretch reads TTNGLVANAELEVKKLQELVRKLEKQNEQLRNRASAVSNC. Composition is skewed to low complexity over residues 268–286 and 466–481; these read TTSTCSSVSRPRSSFSLYS and IPSSTSLQSLSSSGIP. 2 disordered regions span residues 268–342 and 461–526; these read TTST…IRDC and QGGS…LQPP. Polar residues predominate over residues 503 to 522; sequence STANGSSIPRSKIAQPQRSF.

The protein belongs to the SLAIN motif-containing family.

Its subcellular location is the cytoplasm. The protein resides in the cytoskeleton. In terms of biological role, microtubule plus-end tracking protein that might be involved in the regulation of cytoplasmic microtubule dynamics, microtubule organization and microtubule elongation. The sequence is that of SLAIN motif-containing protein 1 (slain1) from Xenopus tropicalis (Western clawed frog).